A 550-amino-acid chain; its full sequence is Glucagon-like peptide 2 receptor (550 aa).

The Extracellular portion of the chain corresponds to methionine 1–alanine 173. Intrachain disulfides connect cysteine 83/cysteine 105, cysteine 96/cysteine 137, and cysteine 118/cysteine 159. 4 N-linked (GlcNAc...) asparagine glycosylation sites follow: asparagine 97, asparagine 113, asparagine 148, and asparagine 162. A helical membrane pass occupies residues leucine 174–threonine 198. At leucine 199–arginine 210 the chain is on the cytoplasmic side. The chain crosses the membrane as a helical span at residues asparagine 211–serine 235. At histidine 236–arginine 261 the chain is on the extracellular side. A helical transmembrane segment spans residues serine 262 to leucine 285. At histidine 286 to leucine 299 the chain is on the cytoplasmic side. A helical membrane pass occupies residues tryptophan 300–alanine 321. The Extracellular portion of the chain corresponds to arginine 322 to isoleucine 339. Residues tryptophan 340–leucine 362 traverse the membrane as a helical segment. Over lysine 363–serine 386 the chain is Cytoplasmic. The helical transmembrane segment at threonine 387–proline 405 threads the bilayer. Over aspartate 406–arginine 417 the chain is Extracellular. Residues leucine 418 to phenylalanine 438 traverse the membrane as a helical segment. Residues alanine 439–isoleucine 550 lie on the Cytoplasmic side of the membrane.

It belongs to the G-protein coupled receptor 2 family.

Its subcellular location is the cell membrane. In terms of biological role, this is a receptor for glucagon-like peptide 2. The activity of this receptor is mediated by G proteins which activate adenylyl cyclase. The chain is Glucagon-like peptide 2 receptor (Glp2r) from Rattus norvegicus (Rat).